We begin with the raw amino-acid sequence, 399 residues long: Subtilisin-like protease 4 (399 aa).

The signal sequence occupies residues 1–19 (MVCLKTLSVFLAAFAAADA). Residues 20–118 (RAVFKTQGHK…VEQDQVVRIS (99 aa)) constitute a propeptide that is removed on maturation. The Inhibitor I9 domain occupies 38–117 (YIVVMKDGVS…YVEQDQVVRI (80 aa)). N102 carries an N-linked (GlcNAc...) asparagine glycan. The Peptidase S8 domain occupies 128–399 (SWGLGRVSHR…NRLLYNGSGQ (272 aa)). Catalysis depends on charge relay system residues D160 and H191. N-linked (GlcNAc...) asparagine glycans are attached at residues N252 and N308. Catalysis depends on S346, which acts as the Charge relay system. N-linked (GlcNAc...) asparagine glycosylation is present at N395.

It belongs to the peptidase S8 family.

The protein resides in the secreted. In terms of biological role, secreted subtilisin-like serine protease with keratinolytic activity that contributes to pathogenicity. This is Subtilisin-like protease 4 (SUB4) from Trichophyton tonsurans (Scalp ringworm fungus).